Reading from the N-terminus, the 228-residue chain is Secreted LysM effector ECP6 (228 aa).

A signal peptide spans 1 to 18; it reads MQSMILFAAALMGAAVNG. 4 cysteine pairs are disulfide-bonded: cysteine 36-cysteine 90, cysteine 64-cysteine 98, cysteine 109-cysteine 163, and cysteine 168-cysteine 220. The LysM 1 domain maps to 42–86; sequence IKYTVVKGDTLTSIAKKFKSGICNIVSVNKLANPNLIELGATLII. The chitin site is built by threonine 51, threonine 53, asparagine 76, and isoleucine 78. Residues asparagine 89, asparagine 95, asparagine 127, and asparagine 133 are each glycosylated (N-linked (GlcNAc...) asparagine). 2 consecutive LysM domains span residues 115-160 and 172-216; these read GSYT…IITV and GTYN…QIIL. Residues glycine 179, leucine 181, valine 183, proline 205, serine 206, and leucine 208 each contribute to the chitin site. Asparagine 222 carries an N-linked (GlcNAc...) asparagine glycan.

The protein belongs to the secreted LysM effector family. Forms homodimers.

It localises to the secreted. Secreted effector that enables the plant pathogenic fungus to manipulate host defenses for successful infection. Binds chitine, but not to any other glycan, including the N-linked glycan chitobiose. Outcompetes host immune receptor for chitin binding through intrachain LysM dimerization. During infection, sequesters chitin oligosaccharides that are released from the cell walls of invading hyphae to prevent elicitation of host immunity. This chain is Secreted LysM effector ECP6, found in Passalora fulva (Tomato leaf mold).